The sequence spans 607 residues: Replication protein E1 (607 aa).

The short motif at 81–83 (KRK) is the Nuclear localization signal element. Phosphoserine; by host occurs at positions 87 and 95. A Nuclear export signal motif is present at residues 94 to 103 (LSPRLQSLNL). A DNA-binding region region spans residues 147–310 (QGGVGLGHIE…TMIQHQTADS (164 aa)). The SF3 helicase domain maps to 409–559 (LNFIVFLDKF…FPFDSDDKPL (151 aa)). 435 to 442 (GPPDTGKS) contributes to the ATP binding site. Lys516 participates in a covalent cross-link: Glycyl lysine isopeptide (Lys-Gly) (interchain with G-Cter in SUMO). The segment at 583-607 (QEDEGEDGSTQRTFQCTTRQVNGPV) is disordered. Polar residues predominate over residues 590–607 (GSTQRTFQCTTRQVNGPV).

Belongs to the papillomaviridae E1 protein family. Can form hexamers. Interacts with E2 protein; this interaction increases E1 DNA binding specificity. Interacts with host DNA polymerase subunit POLA2. Interacts with host single stranded DNA-binding protein RPA1. Interacts with host TOP1; this interaction stimulates the enzymatic activity of TOP1. Post-translationally, phosphorylated. In terms of processing, sumoylated.

The protein resides in the host nucleus. The enzyme catalyses Couples ATP hydrolysis with the unwinding of duplex DNA by translocating in the 3'-5' direction.. The catalysed reaction is ATP + H2O = ADP + phosphate + H(+). Functionally, ATP-dependent DNA 3'-5' helicase required for initiation of viral DNA replication. It forms a complex with the viral E2 protein. The E1-E2 complex binds to the replication origin which contains binding sites for both proteins. During the initial step, a dimer of E1 interacts with a dimer of protein E2 leading to a complex that binds the viral origin of replication with high specificity. Then, a second dimer of E1 displaces the E2 dimer in an ATP-dependent manner to form the E1 tetramer. Following this, two E1 monomers are added to each half of the site, which results in the formation of two E1 trimers on the viral ori. Subsequently, two hexamers will be created. The double hexamer acts as a bi-directional helicase machinery and unwinds the viral DNA and then recruits the host DNA polymerase to start replication. In Human papillomavirus 23, this protein is Replication protein E1.